Consider the following 291-residue polypeptide: Putative GATA transcription factor 13 (291 aa).

The GATA-type zinc-finger motif lies at 187-241 (KSRRLKCTHCETTTTPQWREGPNGRKTLCNACGIRFRSGRLVLEYRPAASPTFIP). The segment at 271-291 (TSGPETRSRLRNFGRPMSYGQ) is disordered.

This sequence belongs to the type IV zinc-finger family. Class A subfamily.

It is found in the nucleus. Functionally, transcriptional activator that specifically binds 5'-GATA-3' or 5'-GAT-3' motifs within gene promoters. May be involved in the regulation of some light-responsive genes. This chain is Putative GATA transcription factor 13 (GATA13), found in Arabidopsis thaliana (Mouse-ear cress).